A 663-amino-acid polypeptide reads, in one-letter code: Zyxin (663 aa).

The disordered stretch occupies residues 35-438 (PPKPKINPFK…QQDQTLGSQG (404 aa)). 2 stretches are compositionally biased toward pro residues: residues 122-148 (FPPPPPPEFSEPFPPPIEEFFPSPPPL) and 160-211 (VPVP…PPSV). The segment covering 298-314 (PQKTTEPPAEASQSSPK) has biased composition (polar residues). Basic and acidic residues-rich tracts occupy residues 342–353 (QRERPRVLEKPR) and 360–375 (EPEHEPTVEVQVERTR). 2 stretches are compositionally biased toward polar residues: residues 377-393 (LGPQTESGRSPGAQSTG) and 427-438 (TGQQDQTLGSQG). 3 consecutive LIM zinc-binding domains span residues 470–531 (ELCG…TLEC), 532–589 (CAVC…RRYA), and 590–660 (PRCC…RARA).

This sequence belongs to the zyxin/ajuba family. As to quaternary structure, interacts (via LIM2 domain) with hesx1/anf1. In terms of tissue distribution, at the early gastrula stage, expressed at a low level in the animal hemisphere. Expression rises by the end of gastrulation in the anterior part of the embryo, where it gradually increases by the midneurula stage. During neurulation, expression continues most intensively in the anterior part of the neural plate and around it. At later stages, intensely expressed in the brain and at lower levels in the spinal cord, eyes, nasal placodes, within somites, and around the cement gland.

The protein resides in the cytoplasm. It localises to the cytoskeleton. It is found in the cell junction. The protein localises to the focal adhesion. Functionally, adhesion plaque protein. May be a component of a signal transduction pathway that mediates adhesion-stimulated changes in gene expression. Suppresses the transcription-repressing activity of hesx1/anf1. The protein is Zyxin of Xenopus laevis (African clawed frog).